The primary structure comprises 89 residues: Acylphosphatase (89 aa).

The region spanning 3–89 is the Acylphosphatase-like domain; the sequence is RKEFLVSGRV…DTREKRFSTY (87 aa). Residues R18 and N36 contribute to the active site.

Belongs to the acylphosphatase family.

The enzyme catalyses an acyl phosphate + H2O = a carboxylate + phosphate + H(+). The polypeptide is Acylphosphatase (acyP) (Clostridium perfringens (strain ATCC 13124 / DSM 756 / JCM 1290 / NCIMB 6125 / NCTC 8237 / Type A)).